Consider the following 209-residue polypeptide: Na(+)-translocating NADH-quinone reductase subunit D (209 aa).

The next 5 helical transmembrane spans lie at 42–62, 70–90, 103–123, 131–151, and 178–198; these read LVMTLAVTLVTAFSSFFISLI, VRIIVQMVIIASLVIVVDQIL, VFVGLIITNCIVMGRAEAYAM, FMDGIGNGLGYGVVLVLVGFV, and NGLFLLAPSAFFIIGLLIWGL.

This sequence belongs to the NqrDE/RnfAE family. In terms of assembly, composed of six subunits; NqrA, NqrB, NqrC, NqrD, NqrE and NqrF.

The protein resides in the cell inner membrane. It carries out the reaction a ubiquinone + n Na(+)(in) + NADH + H(+) = a ubiquinol + n Na(+)(out) + NAD(+). Functionally, NQR complex catalyzes the reduction of ubiquinone-1 to ubiquinol by two successive reactions, coupled with the transport of Na(+) ions from the cytoplasm to the periplasm. NqrA to NqrE are probably involved in the second step, the conversion of ubisemiquinone to ubiquinol. This is Na(+)-translocating NADH-quinone reductase subunit D from Yersinia enterocolitica serotype O:8 / biotype 1B (strain NCTC 13174 / 8081).